The sequence spans 245 residues: Mitochondrial import inner membrane translocase subunit Tim21 (245 aa).

The transit peptide at 1 to 18 (MICAFLRVVRHAEKLHGS) directs the protein to the mitochondrion. Residues 64–97 (FWTQGPDPRKAKEDSSKQVSINRNQREETGVSTS) are disordered. The segment covering 70 to 79 (DPRKAKEDSS) has biased composition (basic and acidic residues). Residues 108 to 128 (TYLIVVLFGVSITGSLLYTIF) traverse the membrane as a helical segment.

Belongs to the TIM21 family. As to quaternary structure, component of the TIM23 complex. Component of the MITRAC (mitochondrial translation regulation assembly intermediate of cytochrome c oxidase complex) complex, the core components of this complex being COA3/MITRAC12 and COX14. Interacts with COA3 and MT-CO1/COX1.

It is found in the mitochondrion membrane. In terms of biological role, participates in the translocation of transit peptide-containing proteins across the mitochondrial inner membrane. Also required for assembly of mitochondrial respiratory chain complex I and complex IV as component of the MITRAC (mitochondrial translation regulation assembly intermediate of cytochrome c oxidase complex) complex. Probably shuttles between the presequence translocase and respiratory-chain assembly intermediates in a process that promotes incorporation of early nuclear-encoded subunits into these complexes. The chain is Mitochondrial import inner membrane translocase subunit Tim21 (Timm21) from Rattus norvegicus (Rat).